The chain runs to 329 residues: 4-hydroxythreonine-4-phosphate dehydrogenase (329 aa).

Positions 136 and 137 each coordinate substrate. Residues histidine 166, histidine 211, and histidine 266 each coordinate a divalent metal cation. Residues lysine 274, asparagine 283, and arginine 292 each contribute to the substrate site.

This sequence belongs to the PdxA family. As to quaternary structure, homodimer. Zn(2+) serves as cofactor. Mg(2+) is required as a cofactor. It depends on Co(2+) as a cofactor.

Its subcellular location is the cytoplasm. The catalysed reaction is 4-(phosphooxy)-L-threonine + NAD(+) = 3-amino-2-oxopropyl phosphate + CO2 + NADH. Its pathway is cofactor biosynthesis; pyridoxine 5'-phosphate biosynthesis; pyridoxine 5'-phosphate from D-erythrose 4-phosphate: step 4/5. Catalyzes the NAD(P)-dependent oxidation of 4-(phosphooxy)-L-threonine (HTP) into 2-amino-3-oxo-4-(phosphooxy)butyric acid which spontaneously decarboxylates to form 3-amino-2-oxopropyl phosphate (AHAP). The protein is 4-hydroxythreonine-4-phosphate dehydrogenase of Neisseria meningitidis serogroup A / serotype 4A (strain DSM 15465 / Z2491).